The sequence spans 203 residues: Twist-related protein 1 (203 aa).

Residues 1–18 are compositionally biased toward low complexity; that stretch reads MMQDVSSSPVSPADDSLS. A disordered region spans residues 1 to 106; sequence MMQDVSSSPV…GGGSPQSYEE (106 aa). Positions 34–43 are enriched in basic residues; it reads RGGRKRRSSR. Gly residues-rich tracts occupy residues 46–65 and 80–100; these read AGGG…GGDE and GCGG…GGGS. Residues 109 to 160 enclose the bHLH domain; sequence TQRVMANVRERQRTQSLNEAFAALRKIIPTLPSDKLSKIQTLKLAARYIDFL. The segment at 162 to 192 is sufficient for transactivation activity; it reads QVLQSDELDSKMASCSYVAHERLSYAFSVWR.

As to quaternary structure, efficient DNA binding requires dimerization with another bHLH protein. Homodimer or heterodimer with E proteins such as TCF3. ID1 binds preferentially to TCF3 but does not interact efficiently with TWIST1 so ID1 levels control the amount of TCF3 available to dimerize with TWIST and thus determine the type of dimer formed.

Its subcellular location is the nucleus. Acts as a transcriptional regulator. Inhibits myogenesis by sequestrating E proteins, inhibiting trans-activation by MEF2, and inhibiting DNA-binding by MYOD1 through physical interaction. This interaction probably involves the basic domains of both proteins. Also represses expression of pro-inflammatory cytokines such as TNFA and IL1B. Regulates cranial suture patterning and fusion. Activates transcription as a heterodimer with E proteins. Regulates gene expression differentially, depending on dimer composition. Homodimers induce expression of FGFR2 and POSTN while heterodimers repress FGFR2 and POSTN expression and induce THBS1 expression. Heterodimerization is also required for osteoblast differentiation. Represses the activity of the circadian transcriptional activator: NPAS2-BMAL1 heterodimer. The protein is Twist-related protein 1 (TWIST1) of Saguinus oedipus (Cotton-top tamarin).